A 188-amino-acid polypeptide reads, in one-letter code: Protein ORFV073 (188 aa).

Interacts with host IKBKG; this interaction inhibits host NF-kappa-B pathway activation.

Its subcellular location is the host nucleus. The protein resides in the host cytoplasm. The protein localises to the host perinuclear region. It is found in the virion. In terms of biological role, plays a role in the inhibition of the host NF-kappa-B pathway early during infection. Prevents the host RELA subunit from reaching the nucleus and activate transcription. This Capra hircus (Goat) protein is Protein ORFV073.